Here is a 209-residue protein sequence, read N- to C-terminus: Peptide methionine sulfoxide reductase MsrA (209 aa).

The active site involves C14. Positions 183 to 209 are disordered; that stretch reads FSALTTGGNQPGARGGLTNNTCQHPRH. Residues 199–209 are compositionally biased toward polar residues; the sequence is LTNNTCQHPRH.

Belongs to the MsrA Met sulfoxide reductase family.

The catalysed reaction is L-methionyl-[protein] + [thioredoxin]-disulfide + H2O = L-methionyl-(S)-S-oxide-[protein] + [thioredoxin]-dithiol. The enzyme catalyses [thioredoxin]-disulfide + L-methionine + H2O = L-methionine (S)-S-oxide + [thioredoxin]-dithiol. Its function is as follows. Has an important function as a repair enzyme for proteins that have been inactivated by oxidation. Catalyzes the reversible oxidation-reduction of methionine sulfoxide in proteins to methionine. This is Peptide methionine sulfoxide reductase MsrA from Pseudomonas fluorescens.